Here is a 249-residue protein sequence, read N- to C-terminus: Probable phosphoglycerate mutase (249 aa).

Substrate is bound by residues 9 to 16 (RHGESTWN), 22 to 23 (TG), R61, 88 to 91 (ERMY), K99, 115 to 116 (RR), and 184 to 185 (GN). H10 acts as the Tele-phosphohistidine intermediate in catalysis. E88 acts as the Proton donor/acceptor in catalysis.

The protein belongs to the phosphoglycerate mutase family. BPG-dependent PGAM subfamily. As to quaternary structure, homodimer.

The catalysed reaction is (2R)-2-phosphoglycerate = (2R)-3-phosphoglycerate. It carries out the reaction (2R)-3-phospho-glyceroyl phosphate = (2R)-2,3-bisphosphoglycerate + H(+). In terms of biological role, catalyzes the interconversion of 2-phosphoglycerate and 3-phosphoglycerate. The polypeptide is Probable phosphoglycerate mutase (gpmA) (Dictyostelium discoideum (Social amoeba)).